Reading from the N-terminus, the 493-residue chain is MPLYSVTVKWGKEKFEGVELNTDEPPMVFKAQLFALTGVQPARQKVMVKGGTLKDDDWGNIKMKNGMTVLMMGSADALPEEPSAKTVFVEDMTEEQLATAMELPCGLTNLGNTCYMNATVQCIRSVPELKDALKRYAGALRASGEMASAQYITAALRDLFDSMDKTSSSIPPIILLQFLHMAFPQFAEKGEQGQYLQQDANECWIQMMRVLQQKLEAIEDDSGRETDSSSAPAVTPSKKKSLIDQYFGVEFETTMKCTESEEEEVTKGKENQLQLSCFINQEVKYLFTGLKLRLQEEITKQSPTLQRNALYIKSSKISRLPAYLTIQMVRFFYKEKESVNAKVLKDVKFPLMLDVYELCTPELQEKMVSFRSKFKDLEDKKVNQQPNANDKNSPPKEIKYEPFSFADDIGSNNCGYYDLQAVLTHQGRSSSSGHYVSWVRRKQDEWIKFDDDKVSIVTPEDILRLSGGGDWHIAYVLLYGPRRVEIMEEESEQ.

A Ubiquitin-like domain is found at 4 to 80 (YSVTVKWGKE…MMGSADALPE (77 aa)). Thr52 bears the Phosphothreonine mark. The USP domain occupies 105–482 (CGLTNLGNTC…IAYVLLYGPR (378 aa)). The active-site Nucleophile is Cys114. A phosphoserine mark is found at Ser143 and Ser148. Thr235 is modified (phosphothreonine). 3 positions are modified to phosphoserine: Ser237, Ser302, and Ser431. His434 functions as the Proton acceptor in the catalytic mechanism. Position 448 is an N6-acetyllysine (Lys448).

This sequence belongs to the peptidase C19 family. USP14/UBP6 subfamily. In terms of assembly, homodimer (Potential). Associates with the 26S proteasome. Interacts with FANCC, CXCR4 and ERN1. Interacts with TRIM14; this interaction recruits USP14 to cleave ubiquitin chains of CGAS and KDM4D.

It localises to the cytoplasm. It is found in the cell membrane. It catalyses the reaction Thiol-dependent hydrolysis of ester, thioester, amide, peptide and isopeptide bonds formed by the C-terminal Gly of ubiquitin (a 76-residue protein attached to proteins as an intracellular targeting signal).. Proteasome-associated deubiquitinase which releases ubiquitin from the proteasome targeted ubiquitinated proteins. Ensures the regeneration of ubiquitin at the proteasome. Is a reversibly associated subunit of the proteasome and a large fraction of proteasome-free protein exists within the cell. Required for the degradation of the chemokine receptor CXCR4 which is critical for CXCL12-induced cell chemotaxis. Also serves as a physiological inhibitor of endoplasmic reticulum-associated degradation (ERAD) under the non-stressed condition by inhibiting the degradation of unfolded endoplasmic reticulum proteins via interaction with ERN1. Indispensable for synaptic development and function at neuromuscular junctions (NMJs). Plays a role in the innate immune defense against viruses by stabilizing the viral DNA sensor CGAS and thus inhibiting its autophagic degradation. Inhibits OPTN-mediated selective autophagic degradation of KDM4D and thereby negatively regulates H3K9me2 and H3K9me3. This is Ubiquitin carboxyl-terminal hydrolase 14 (Usp14) from Mus musculus (Mouse).